Here is a 287-residue protein sequence, read N- to C-terminus: Isopentenyl-diphosphate Delta-isomerase 1, chloroplastic (287 aa).

The N-terminal 51 residues, 1-51 (MTLLLNTTAKLYIAPRTLPFTSSSTFARSPFLRIPSLLKPLSPLTARVSLS), are a transit peptide targeting the chloroplast. Lys90 is a binding site for substrate. Positions 94 and 106 each coordinate Mg(2+). The Nudix hydrolase domain occupies 104-256 (LLHRAFSVFL…GLKLSPWFRL (153 aa)). The substrate site is built by Arg125 and Lys129. The active site involves Cys141. Ser142 contributes to the substrate binding site. A Nudix box motif is present at residues 142-172 (SHPLYRESELIDEESLGARNAAQRKLLDELG). Mg(2+) is bound by residues Glu201 and Glu203. Residue Glu203 is part of the active site.

The protein belongs to the IPP isomerase type 1 family. In terms of assembly, monomer. Mg(2+) is required as a cofactor. Mainly expressed in roots and trichomes and, to a lower extent, in leaves, flowers and stems.

It localises to the plastid. The protein localises to the chloroplast. The enzyme catalyses isopentenyl diphosphate = dimethylallyl diphosphate. The protein operates within isoprenoid biosynthesis; dimethylallyl diphosphate biosynthesis; dimethylallyl diphosphate from isopentenyl diphosphate: step 1/1. Its pathway is porphyrin-containing compound metabolism; chlorophyll biosynthesis. In terms of biological role, catalyzes the 1,3-allylic rearrangement of the homoallylic substrate isopentenyl (IPP) to its highly electrophilic allylic isomer, dimethylallyl diphosphate (DMAPP). This is Isopentenyl-diphosphate Delta-isomerase 1, chloroplastic from Cannabis sativa (Hemp).